We begin with the raw amino-acid sequence, 434 residues long: UDP-N-acetylglucosamine 1-carboxyvinyltransferase (434 aa).

22 to 23 (KN) serves as a coordination point for phosphoenolpyruvate. Arginine 99 lines the UDP-N-acetyl-alpha-D-glucosamine pocket. The Proton donor role is filled by cysteine 123. A 2-(S-cysteinyl)pyruvic acid O-phosphothioketal modification is found at cysteine 123. UDP-N-acetyl-alpha-D-glucosamine is bound by residues 128-132 (RPVDQ), aspartate 317, and isoleucine 339.

The protein belongs to the EPSP synthase family. MurA subfamily.

The protein localises to the cytoplasm. It catalyses the reaction phosphoenolpyruvate + UDP-N-acetyl-alpha-D-glucosamine = UDP-N-acetyl-3-O-(1-carboxyvinyl)-alpha-D-glucosamine + phosphate. It functions in the pathway cell wall biogenesis; peptidoglycan biosynthesis. Its function is as follows. Cell wall formation. Adds enolpyruvyl to UDP-N-acetylglucosamine. This chain is UDP-N-acetylglucosamine 1-carboxyvinyltransferase, found in Paracidovorax citrulli (strain AAC00-1) (Acidovorax citrulli).